The following is a 148-amino-acid chain: Deoxyuridine 5'-triphosphate nucleotidohydrolase (148 aa).

Substrate contacts are provided by residues 67 to 69, N80, 84 to 86, and M94; these read RSG and LID.

The protein belongs to the dUTPase family. Mg(2+) is required as a cofactor.

The enzyme catalyses dUTP + H2O = dUMP + diphosphate + H(+). The protein operates within pyrimidine metabolism; dUMP biosynthesis; dUMP from dCTP (dUTP route): step 2/2. Its function is as follows. This enzyme is involved in nucleotide metabolism: it produces dUMP, the immediate precursor of thymidine nucleotides and it decreases the intracellular concentration of dUTP so that uracil cannot be incorporated into DNA. In Burkholderia mallei (strain NCTC 10247), this protein is Deoxyuridine 5'-triphosphate nucleotidohydrolase.